The primary structure comprises 388 residues: S-adenosylmethionine synthase (388 aa).

Histidine 16 lines the ATP pocket. Mg(2+) is bound at residue aspartate 18. Glutamate 44 serves as a coordination point for K(+). Residues glutamate 57 and glutamine 100 each contribute to the L-methionine site. Positions 100–110 are flexible loop; the sequence is QSPEIAQGVDR. Residues 165-167, aspartate 240, 246-247, alanine 263, and lysine 267 contribute to the ATP site; these read DAK and RK. L-methionine is bound at residue aspartate 240. Position 271 (lysine 271) interacts with L-methionine.

This sequence belongs to the AdoMet synthase family. Homotetramer; dimer of dimers. Requires Mg(2+) as cofactor. It depends on K(+) as a cofactor.

It localises to the cytoplasm. It catalyses the reaction L-methionine + ATP + H2O = S-adenosyl-L-methionine + phosphate + diphosphate. It participates in amino-acid biosynthesis; S-adenosyl-L-methionine biosynthesis; S-adenosyl-L-methionine from L-methionine: step 1/1. Catalyzes the formation of S-adenosylmethionine (AdoMet) from methionine and ATP. The overall synthetic reaction is composed of two sequential steps, AdoMet formation and the subsequent tripolyphosphate hydrolysis which occurs prior to release of AdoMet from the enzyme. This chain is S-adenosylmethionine synthase, found in Acinetobacter baylyi (strain ATCC 33305 / BD413 / ADP1).